The chain runs to 512 residues: cAMP-dependent protein kinase catalytic subunit (512 aa).

The segment covering 1–15 has biased composition (polar residues); the sequence is MDTTAVASKGSTNVG. Disordered regions lie at residues 1–79 and 118–166; these read MDTT…SSLW and IDNL…GLRD. Residues 16–27 are compositionally biased toward low complexity; it reads SSTDTLSTSASL. Composition is skewed to polar residues over residues 32 to 52 and 62 to 79; these read NAGSVNEYSEQQRHGTNSFNG and SDASVSNGHNNHNESSLW. Residues 143-166 show a composition bias toward basic and acidic residues; sequence SRDGRGELGSEHGERRSAMDGLRD. Residues 201 to 456 enclose the Protein kinase domain; it reads FNFLQTLGTG…SMDIIMHPWF (256 aa). Residues 207 to 215 and Lys230 each bind ATP; that span reads LGTGSFGRV. Catalysis depends on Asp324, which acts as the Proton acceptor. A Phosphothreonine modification is found at Thr356. Residues 457-512 form the AGC-kinase C-terminal domain; the sequence is RDISWDKILTRKIEVPYVPPIQAGMGDSSQFDAYADVATDYGTSEDPEFTSIFKDF.

It belongs to the protein kinase superfamily. AGC Ser/Thr protein kinase family. cAMP subfamily.

It catalyses the reaction L-seryl-[protein] + ATP = O-phospho-L-seryl-[protein] + ADP + H(+). It carries out the reaction L-threonyl-[protein] + ATP = O-phospho-L-threonyl-[protein] + ADP + H(+). Activated by cAMP. The protein is cAMP-dependent protein kinase catalytic subunit (pka1) of Schizosaccharomyces pombe (strain 972 / ATCC 24843) (Fission yeast).